The sequence spans 476 residues: Adenosylhomocysteinase (476 aa).

Substrate contacts are provided by T61, D140, and E200. Position 201-203 (201-203 (TTT)) interacts with NAD(+). K230 and D234 together coordinate substrate. Residues N235, 264–269 (GYGDVG), E287, N322, 343–345 (IGH), and N389 contribute to the NAD(+) site.

This sequence belongs to the adenosylhomocysteinase family. It depends on NAD(+) as a cofactor.

It is found in the cytoplasm. The catalysed reaction is S-adenosyl-L-homocysteine + H2O = L-homocysteine + adenosine. The protein operates within amino-acid biosynthesis; L-homocysteine biosynthesis; L-homocysteine from S-adenosyl-L-homocysteine: step 1/1. In terms of biological role, may play a key role in the regulation of the intracellular concentration of adenosylhomocysteine. The protein is Adenosylhomocysteinase of Acidovorax ebreus (strain TPSY) (Diaphorobacter sp. (strain TPSY)).